The chain runs to 328 residues: RING finger protein 175 (328 aa).

5 helical membrane-spanning segments follow: residues 51–71 (MHVE…IVLV), 83–103 (LVTL…LYWW), 104–121 (RFLS…YILF), 149–169 (AFGV…NLFF), and 180–200 (GIVS…FAEI). Residues 227-277 (CAVCGQKIIVELDEEGLIENTYQLSCNHVFHEFCIRGWCIVGKKQTCPYCK) form an RING-type; atypical zinc finger.

It is found in the membrane. The chain is RING finger protein 175 (RNF175) from Homo sapiens (Human).